The chain runs to 258 residues: Synapse differentiation-inducing gene protein 1 (258 aa).

At 1–181 the chain is on the cytoplasmic side; the sequence is MAGVVEQKSG…NFLVMPPRDH (181 aa). Phosphoserine is present on Ser137. A helical membrane pass occupies residues 182–202; that stretch reads LGLSVFSMLCCFWPLGIAAFY. Residues 203–228 are Extracellular-facing; it reads LSHETNKAVAKGDFHQASTSSRRALF. The segment at residues 229–249 is an intramembrane region (helical); sequence LAVLSITIGTGIYVGVAVALI. Over 250–258 the chain is Extracellular; sequence AYLSKSNHL.

The protein belongs to the CD225/Dispanin family. In terms of assembly, homodimer. Interacts with GRIA1 and GRIA2.

Its subcellular location is the cell membrane. The protein localises to the early endosome membrane. It is found in the postsynaptic density membrane. It localises to the synapse. The protein resides in the cell projection. Its subcellular location is the dendrite. The protein localises to the dendritic spine. May regulate AMPA receptor content at nascent synapses, and have a role in postsynaptic development and maturation. This is Synapse differentiation-inducing gene protein 1 (SYNDIG1) from Bos taurus (Bovine).